A 921-amino-acid polypeptide reads, in one-letter code: Isoleucine--tRNA ligase (921 aa).

The 'HIGH' region motif lies at 57–67 (PYANGDIHMGH). E552 serves as a coordination point for L-isoleucyl-5'-AMP. Residues 593 to 597 (KMSKS) carry the 'KMSKS' region motif. ATP is bound at residue K596. Zn(2+)-binding residues include C888, C891, C908, and C911.

Belongs to the class-I aminoacyl-tRNA synthetase family. IleS type 1 subfamily. In terms of assembly, monomer. Zn(2+) is required as a cofactor.

The protein resides in the cytoplasm. The catalysed reaction is tRNA(Ile) + L-isoleucine + ATP = L-isoleucyl-tRNA(Ile) + AMP + diphosphate. Functionally, catalyzes the attachment of isoleucine to tRNA(Ile). As IleRS can inadvertently accommodate and process structurally similar amino acids such as valine, to avoid such errors it has two additional distinct tRNA(Ile)-dependent editing activities. One activity is designated as 'pretransfer' editing and involves the hydrolysis of activated Val-AMP. The other activity is designated 'posttransfer' editing and involves deacylation of mischarged Val-tRNA(Ile). This Bacillus cytotoxicus (strain DSM 22905 / CIP 110041 / 391-98 / NVH 391-98) protein is Isoleucine--tRNA ligase.